The primary structure comprises 152 residues: MEVRVFEGEFKGDGLSMAIVVARFNDLLTDELLSGAIDCFERHGVERVDVFKVPGSFEIPIIAKKLAESGKYDAILALGVVVRGETKHFDLVANEVSKGVAQAGLITGVPVIFGVIAVEDELQGLNRAGIKSNKGFEYAMAALEMANLMKKL.

5-amino-6-(D-ribitylamino)uracil is bound by residues F24, 56–58 (SFE), and 80–82 (VVV). 85-86 (ET) is a binding site for (2S)-2-hydroxy-3-oxobutyl phosphate. The active-site Proton donor is H88. F113 lines the 5-amino-6-(D-ribitylamino)uracil pocket. A (2S)-2-hydroxy-3-oxobutyl phosphate-binding site is contributed by R127.

It belongs to the DMRL synthase family.

The catalysed reaction is (2S)-2-hydroxy-3-oxobutyl phosphate + 5-amino-6-(D-ribitylamino)uracil = 6,7-dimethyl-8-(1-D-ribityl)lumazine + phosphate + 2 H2O + H(+). Its pathway is cofactor biosynthesis; riboflavin biosynthesis; riboflavin from 2-hydroxy-3-oxobutyl phosphate and 5-amino-6-(D-ribitylamino)uracil: step 1/2. Catalyzes the formation of 6,7-dimethyl-8-ribityllumazine by condensation of 5-amino-6-(D-ribitylamino)uracil with 3,4-dihydroxy-2-butanone 4-phosphate. This is the penultimate step in the biosynthesis of riboflavin. The chain is 6,7-dimethyl-8-ribityllumazine synthase from Thermococcus onnurineus (strain NA1).